Here is a 124-residue protein sequence, read N- to C-terminus: Small ribosomal subunit protein uS12 (124 aa).

D89 bears the 3-methylthioaspartic acid mark.

This sequence belongs to the universal ribosomal protein uS12 family. As to quaternary structure, part of the 30S ribosomal subunit. Contacts proteins S8 and S17. May interact with IF1 in the 30S initiation complex.

Its function is as follows. With S4 and S5 plays an important role in translational accuracy. Interacts with and stabilizes bases of the 16S rRNA that are involved in tRNA selection in the A site and with the mRNA backbone. Located at the interface of the 30S and 50S subunits, it traverses the body of the 30S subunit contacting proteins on the other side and probably holding the rRNA structure together. The combined cluster of proteins S8, S12 and S17 appears to hold together the shoulder and platform of the 30S subunit. This Campylobacter hominis (strain ATCC BAA-381 / DSM 21671 / CCUG 45161 / LMG 19568 / NCTC 13146 / CH001A) protein is Small ribosomal subunit protein uS12.